Consider the following 1228-residue polypeptide: Serine/threonine-protein kinase CST20 (1228 aa).

Polar residues predominate over residues 1–18; the sequence is MSILSENNPTQTSITDPN. 2 disordered regions span residues 1–382 and 405–468; these read MSIL…TAHN and NSTN…HSQE. 2 stretches are compositionally biased toward low complexity: residues 57 to 70 and 95 to 123; these read NTTS…SLGS and ESGS…NPES. The segment covering 148–159 has biased composition (basic and acidic residues); the sequence is HQGDDSDNEKQY. Polar residues-rich tracts occupy residues 173–195, 205–222, and 232–244; these read DSYS…NNVS, TSSL…NENA, and PQVS…SFHD. The segment covering 246 to 255 has biased composition (low complexity); it reads SSVISSSTSV. 2 stretches are compositionally biased toward polar residues: residues 260-275 and 309-328; these read SNPT…SYKS and DTLS…TLQG. Positions 347 to 367 are enriched in low complexity; it reads NTSATSRNTSGTSTSTVVKNS. The span at 368 to 382 shows a compositional bias: polar residues; the sequence is RSGTSKLTSTSTAHN. The segment covering 437 to 466 has biased composition (low complexity); that stretch reads KVRGVFSSMFGKNKSTSSSSSSNSGSNSHS. The CRIB domain maps to 473-486; the sequence is ISTPFNAKHLAHVG. 2 disordered regions span residues 543-829 and 865-917; these read FHFD…ALAD and LREK…KQAA. Positions 548–559 are enriched in polar residues; the sequence is NKSSSSGWSNEN. Over residues 568–579 the composition is skewed to gly residues; the sequence is SNSGSGGGGGGA. Polar residues predominate over residues 602–611; the sequence is ITPSQSMPTK. Over residues 612-626 the composition is skewed to basic and acidic residues; the sequence is TESKQSENQHPHEDN. A compositionally biased stretch (polar residues) spans 627–640; that stretch reads ATQYTPRTPTSHVQ. Composition is skewed to low complexity over residues 668-681, 693-708, and 734-747; these read PSSQ…SQSD, ISPS…SKSL, and SIPK…SLSS. Residues 748 to 759 show a composition bias toward polar residues; sequence QLRPATNGSTTA. A compositionally biased stretch (pro residues) spans 787 to 805; the sequence is APPPPPSASPAPPVPPAPP. The segment covering 809-824 has biased composition (polar residues); sequence LSEQTSEIPQQRTAPS. The segment covering 865-874 has biased composition (basic and acidic residues); it reads LREKNERQNR. Positions 875–890 are enriched in polar residues; the sequence is QQETGQNNADTASGGS. The Protein kinase domain occupies 951–1203; that stretch reads YVDLVKIGQG…ADELLHDNFI (253 aa). ATP is bound by residues 957–965 and K981; that span reads IGQGASGGV. Catalysis depends on D1071, which acts as the Proton acceptor.

Belongs to the protein kinase superfamily. STE Ser/Thr protein kinase family. STE20 subfamily.

The protein resides in the cytoplasm. The protein localises to the nucleus. It carries out the reaction L-seryl-[protein] + ATP = O-phospho-L-seryl-[protein] + ADP + H(+). It catalyses the reaction L-threonyl-[protein] + ATP = O-phospho-L-threonyl-[protein] + ADP + H(+). MAP4K component of the MAPK pathway required for the mating pheromone response, and the regulation of cell polarity and cell cycle. Phosphorylates histone H2B to form H2BS10ph. Required for hyphal formation and virulence. The chain is Serine/threonine-protein kinase CST20 (CST20) from Candida albicans (strain SC5314 / ATCC MYA-2876) (Yeast).